Consider the following 751-residue polypeptide: Polyadenylate-binding protein, cytoplasmic and nuclear (751 aa).

Polar residues-rich tracts occupy residues 1–26 (MSAE…NPAA) and 36–50 (ESAS…NQPH). The interval 1 to 50 (MSAEVSTTPAADNTVNGTPEATNPAATSAPEVTAVESASPSATPSANQPH) is disordered. RRM domains lie at 52–130 (ASLY…WSQR), 140–217 (GNVF…HHIS), 233–310 (TNVY…RAQK), and 336–458 (VNLY…LAQR). Disordered stretches follow at residues 371–413 (TVTA…KKTE) and 601–643 (GQGM…REEV). The span at 379–413 (ESEKEKESNKENEKEGEEKTEEKPKESEEEAKKTE) shows a compositional bias: basic and acidic residues. A compositionally biased stretch (gly residues) spans 603–629 (GMRGPGYGQGRGGAPVQGGPRPQGGRG). One can recognise a PABC domain in the interval 646–723 (TGGLTAQTLN…ALSVYDEYMK (78 aa)). The tract at residues 725–751 (KGEGEAPAEPAKPKEDAAETATEENKS) is disordered. The span at 735 to 751 (AKPKEDAAETATEENKS) shows a compositional bias: basic and acidic residues.

It belongs to the polyadenylate-binding protein type-1 family.

It is found in the cytoplasm. The protein localises to the nucleus. Functionally, binds the poly(A) tail of mRNA. Appears to be an important mediator of the multiple roles of the poly(A) tail in mRNA biogenesis, stability and translation. In the nucleus, involved in both mRNA cleavage and polyadenylation. Is also required for efficient mRNA export to the cytoplasm. Acts in concert with a poly(A)-specific nuclease (PAN) to affect poly(A) tail shortening, which may occur concomitantly with either nucleocytoplasmic mRNA transport or translational initiation. In the cytoplasm, stimulates translation initiation and regulates mRNA decay through translation termination-coupled poly(A) shortening, probably mediated by PAN. The sequence is that of Polyadenylate-binding protein, cytoplasmic and nuclear (pab1) from Neosartorya fischeri (strain ATCC 1020 / DSM 3700 / CBS 544.65 / FGSC A1164 / JCM 1740 / NRRL 181 / WB 181) (Aspergillus fischerianus).